A 969-amino-acid polypeptide reads, in one-letter code: RNA polymerase-associated protein RapA (969 aa).

The 171-residue stretch at 164 to 334 (EVGRRYAPRV…FARLRLLDPD (171 aa)) folds into the Helicase ATP-binding domain. 177–184 (DEVGLGKT) contributes to the ATP binding site. The DEAH box signature appears at 280–283 (DEAH). The region spanning 492–672 (RVNWLLELLK…GLEPLIEESA (181 aa)) is the Helicase C-terminal domain.

Belongs to the SNF2/RAD54 helicase family. RapA subfamily. Interacts with the RNAP. Has a higher affinity for the core RNAP than for the holoenzyme. Its ATPase activity is stimulated by binding to RNAP.

In terms of biological role, transcription regulator that activates transcription by stimulating RNA polymerase (RNAP) recycling in case of stress conditions such as supercoiled DNA or high salt concentrations. Probably acts by releasing the RNAP, when it is trapped or immobilized on tightly supercoiled DNA. Does not activate transcription on linear DNA. Probably not involved in DNA repair. The chain is RNA polymerase-associated protein RapA from Aliivibrio salmonicida (strain LFI1238) (Vibrio salmonicida (strain LFI1238)).